A 263-amino-acid polypeptide reads, in one-letter code: Small ribosomal subunit protein uS2 (263 aa).

Over residues 223–249 (KALREQDGEALANEEKEITDEEKKEVL) the composition is skewed to basic and acidic residues. The interval 223–263 (KALREQDGEALANEEKEITDEEKKEVLDEAMSEEDFGEEQE) is disordered. The span at 250–263 (DEAMSEEDFGEEQE) shows a compositional bias: acidic residues.

Belongs to the universal ribosomal protein uS2 family.

This chain is Small ribosomal subunit protein uS2, found in Campylobacter jejuni subsp. jejuni serotype O:6 (strain 81116 / NCTC 11828).